The following is a 267-amino-acid chain: uncharacterized protein (267 aa).

Residues 30–52 (FMRIFLLFLFFVLFTFGVEGYVI) traverse the membrane as a helical segment.

The protein localises to the membrane. This is an uncharacterized protein from Aquifex aeolicus (strain VF5).